The primary structure comprises 687 residues: Chloride channel protein ClC-Ka (687 aa).

The next 4 helical transmembrane spans lie at 52-72 (FLMTLGVLMALVSYAMNFAIG), 161-181 (LFLGKVGPFVHLSVMIAAYLG), 202-222 (VAAAAVGVATVFAAPFSGVLF), and 236-256 (YWRGFFAATCGAFIFRLLAVF). Residues glutamate 259, glutamate 261, aspartate 278, and glutamate 281 each contribute to the Ca(2+) site. A run of 6 helical transmembrane segments spans residues 282–302 (IFFFVALGGICGVLSCAYLFC), 329–349 (ALATLLLASITYPPGVGHFLA), 396–416 (FTIFGTLAFFLVMKFWMLILA), 417–437 (TTIPMPAGYFMPIFILGAAIG), 452–472 (IVTGGVTNPIMPGGYALAGAA), and 486–506 (LLAFELTGQIVHALPVLMAVL). The Cytoplasmic segment spans residues 507 to 687 (AANAIAQSCQ…SNLTNPPAPK (181 aa)). CBS domains lie at 551-609 (MNHS…EPPS) and 626-684 (CPTE…TNPP).

Belongs to the chloride channel (TC 2.A.49) family. CLCNKA subfamily. In terms of assembly, homodimer. Interacts with BSND.

It localises to the basolateral cell membrane. The catalysed reaction is chloride(in) = chloride(out). It catalyses the reaction bromide(in) = bromide(out). It carries out the reaction nitrate(in) = nitrate(out). The enzyme catalyses iodide(out) = iodide(in). Activated by extracellular Ca(2+) and inhibited by extracellular acidic pH. Functionally, anion-selective channel permeable to small monovalent anions with ion selectivity for chloride &gt; bromide &gt; nitrate &gt; iodide. Forms a homodimeric channel where each subunit has its own ion conduction pathway. May conduct double-barreled currents controlled by two types of gates, two fast gates that control each subunit independently and a slow common gate that opens and shuts off both subunits simultaneously. Assembles with the regulatory subunit BSND/Barttin for sorting at the basolateral plasma membrane domain and functional switch to the ion conducting state. CLCNKA:BSND channels display mostly a linear current-voltage relationship with fast gating at negative potentials. Mediates transepithelial chloride transport from the lumen to interstitial compartment along the thin ascending limb of Henle's loop, contributing to generation of hypertonic medullary interstitium as a countercurrent system to achieve urine concentration. Conducts chloride currents in the stria vascularis of the inner ear to establish the endocochlear potential necessary for normal hearing. This Homo sapiens (Human) protein is Chloride channel protein ClC-Ka.